The primary structure comprises 490 residues: Zinc finger protein STP4 (490 aa).

2 stretches are compositionally biased toward low complexity: residues 1 to 16 and 52 to 73; these read MLVS…SVMS and PSLP…STLN. Positions 1–85 are disordered; it reads MLVSSSFASS…PPPPLTTSYS (85 aa). S153 and S155 each carry phosphoserine. Over residues 231–247 the composition is skewed to low complexity; that stretch reads QQQQQLNSSSSASALPS. Positions 231–273 are disordered; the sequence is QQQQQLNSSSSASALPSIHSPLTNEHTSRYSSSLKDSAKITKQ. Residues 250-265 are compositionally biased toward polar residues; the sequence is SPLTNEHTSRYSSSLK. The C2H2-type zinc-finger motif lies at 304–326; that stretch reads HKCPICQRGFARNNDLIRHKKRH. The tract at residues 338–375 is disordered; sequence ESDNNSGADDQDDTARTSANNDSDDSNDKLAASSSSEE.

It localises to the cytoplasm. Its subcellular location is the mitochondrion. It is found in the nucleus. This chain is Zinc finger protein STP4 (STP4), found in Saccharomyces cerevisiae (strain ATCC 204508 / S288c) (Baker's yeast).